Here is a 133-residue protein sequence, read N- to C-terminus: Peptidyl-prolyl cis-trans isomerase PIN4 (133 aa).

A compositionally biased stretch (basic and acidic residues) spans 1-29 (MGKNDKKGADKGGKAKGGDKGKDAKDTKD). A disordered region spans residues 1-42 (MGKNDKKGADKGGKAKGGDKGKDAKDTKDSGSGGKAKGAQSI). Residues 39–131 (AQSINVRHIL…FGYHIIMVEG (93 aa)) form the PpiC domain.

It belongs to the PpiC/parvulin rotamase family. PIN4 subfamily.

The enzyme catalyses [protein]-peptidylproline (omega=180) = [protein]-peptidylproline (omega=0). PPIases accelerate the folding of proteins. It catalyzes the cis-trans isomerization of proline imidic peptide bonds in oligopeptides. This Gibberella zeae (strain ATCC MYA-4620 / CBS 123657 / FGSC 9075 / NRRL 31084 / PH-1) (Wheat head blight fungus) protein is Peptidyl-prolyl cis-trans isomerase PIN4 (PIN4).